Here is a 2563-residue protein sequence, read N- to C-terminus: Highly reducing polyketide synthase 2 (2563 aa).

The 441-residue stretch at 11–451 (MSDIAIVGYS…GSNSHIVLDD (441 aa)) folds into the Ketosynthase family 3 (KS3) domain. Active-site for beta-ketoacyl synthase activity residues include Cys182, His317, and His357. Residues 589 to 890 (FAFTGQGAQY…DTLSEMSSAS (302 aa)) form the Malonyl-CoA:ACP transacylase (MAT) domain. Residues 970–1101 (GELLGVRVSD…ANISVEFQDN (132 aa)) form an N-terminal hotdog fold region. The region spanning 970–1269 (GELLGVRVSD…TSAVSGGITH (300 aa)) is the PKS/mFAS DH domain. Residue His1002 is the Proton acceptor; for dehydratase activity of the active site. Residues 1126–1269 (TLPIDPRVFY…TSAVSGGITH (144 aa)) are C-terminal hotdog fold. The active-site Proton donor; for dehydratase activity is the Asp1186. Residues 1296–1618 (FAANAVPKDD…FSGNDLVIRD (323 aa)) form a methyltransferase (CMet) domain region. The Enoyl reductase (ER) domain occupies 1858 to 2168 (GSLDSLQFVE…QEDTSERVIV (311 aa)). A Ketoreductase (KR) domain is found at 2192–2370 (STYLVAGGSG…ALSLDIGWMS (179 aa)). The Carrier domain maps to 2480–2561 (SDARERQQVV…GVAEVVEARS (82 aa)). At Ser2521 the chain carries O-(pantetheine 4'-phosphoryl)serine.

It depends on pantetheine 4'-phosphate as a cofactor.

Its pathway is secondary metabolite biosynthesis. Functionally, highly reducing polyketide synthase; part of the gene cluster that mediates the biosynthesis of the tetraketides fugralins such as linear fugralin A and cyclic fugralin B, volatile compounds that play a role in the asexual reproductive cycle but are not involved in pathogenicity. One of the key features of fugralins is the presence of a double methyl group, which is only rarely encountered in fungal secondary metabolites. As the fugralins cluster does not contain an independent methyltransferase, the PKS FGR1 is probably responsible for adding two methyl groups to the same carbon atom. Fugralin B is similar to fugralin A except for a cyclization between the carboxylic acid C-8 and the alcohol on C-4 resulting in a six membered lactone ring, probably catalyzed by the cyclase FGR4. The exact role of the individual cluster genes remains unknown and further work is needed to unravel the biosynthetic pathway. This Gibberella zeae (strain ATCC MYA-4620 / CBS 123657 / FGSC 9075 / NRRL 31084 / PH-1) (Wheat head blight fungus) protein is Highly reducing polyketide synthase 2.